Reading from the N-terminus, the 517-residue chain is Ribose import ATP-binding protein RbsA (517 aa).

ABC transporter domains follow at residues 11–251 (LEMR…VGRD) and 263–507 (YDPG…ALAT). Position 43-50 (43-50 (GENGAGKS)) interacts with ATP.

Belongs to the ABC transporter superfamily. Ribose importer (TC 3.A.1.2.1) family. The complex is composed of an ATP-binding protein (RbsA), two transmembrane proteins (RbsC) and a solute-binding protein (RbsB).

The protein resides in the cell inner membrane. It catalyses the reaction D-ribose(out) + ATP + H2O = D-ribose(in) + ADP + phosphate + H(+). Its function is as follows. Part of the ABC transporter complex RbsABC involved in ribose import. Responsible for energy coupling to the transport system. In Burkholderia pseudomallei (strain K96243), this protein is Ribose import ATP-binding protein RbsA.